A 274-amino-acid polypeptide reads, in one-letter code: 16S rRNA (guanine(1405)-N(7))-methyltransferase (274 aa).

S-adenosyl-L-methionine is bound by residues Phe-64, 102–104, Arg-108, Ala-133, Asp-156, 182–183, Leu-198, and Gln-207; these read HVS and DL.

This sequence belongs to the methyltransferase superfamily. Aminoglycoside resistance family.

It carries out the reaction guanosine(1405) in 16S rRNA + S-adenosyl-L-methionine = N(7)-methylguanosine(1405) in 16S rRNA + S-adenosyl-L-homocysteine. In terms of biological role, specifically methylates the N(7) position of guanine 1405 in 16S rRNA. Confers resistance to various aminoglycosides, including gentamicin and kanamycin. This is 16S rRNA (guanine(1405)-N(7))-methyltransferase (grm) from Micromonospora echinospora (Micromonospora purpurea).